The primary structure comprises 364 residues: tRNA-specific 2-thiouridylase MnmA 1 (364 aa).

ATP is bound by residues 11-18 (GMSGGTDS) and phenylalanine 37. The active-site Nucleophile is the cysteine 96. The cysteines at positions 96 and 193 are disulfide-linked. Position 120 (glycine 120) interacts with ATP. The segment at 142–144 (KDQ) is interaction with tRNA. The active-site Cysteine persulfide intermediate is the cysteine 193. The interaction with tRNA stretch occupies residues 309–310 (RY).

The protein belongs to the MnmA/TRMU family.

Its subcellular location is the cytoplasm. It carries out the reaction S-sulfanyl-L-cysteinyl-[protein] + uridine(34) in tRNA + AH2 + ATP = 2-thiouridine(34) in tRNA + L-cysteinyl-[protein] + A + AMP + diphosphate + H(+). Its function is as follows. Catalyzes the 2-thiolation of uridine at the wobble position (U34) of tRNA, leading to the formation of s(2)U34. The polypeptide is tRNA-specific 2-thiouridylase MnmA 1 (Bacteroides fragilis (strain YCH46)).